The following is a 149-amino-acid chain: Arginine regulator (149 aa).

This sequence belongs to the ArgR family.

It localises to the cytoplasm. Its pathway is amino-acid degradation; L-arginine degradation via ADI pathway. In terms of biological role, regulates the transcription of the arc operon, involved in arginine catabolism. The sequence is that of Arginine regulator (argR1) from Bacillus cereus (strain ATCC 10987 / NRS 248).